A 623-amino-acid polypeptide reads, in one-letter code: NADPH-dependent diflavin oxidoreductase 1 (623 aa).

One can recognise a Flavodoxin-like domain in the interval 8–153 (LLVLYASQTG…TLDPWMLSLW (146 aa)). Residues 14 to 19 (SQTGNA), 62 to 65 (STTG), and D135 each bind FMN. One can recognise an FAD-binding FR-type domain in the interval 221–467 (KPDCFLKMTR…SLPAPSQSLP (247 aa)). FAD is bound by residues R369, 399–402 (RAFS), and 433–436 (GLCS). NADP(+)-binding positions include T475, 541–542 (SR), 547–551 (KVYVQ), and D583. FAD is bound at residue W622.

The protein belongs to the NADPH-dependent diflavin oxidoreductase NDOR1 family. It in the N-terminal section; belongs to the flavodoxin family. In the C-terminal section; belongs to the flavoprotein pyridine nucleotide cytochrome reductase family. As to quaternary structure, interacts with At5g18400. FAD serves as cofactor. Requires FMN as cofactor. In terms of tissue distribution, widely expressed.

Its subcellular location is the cytoplasm. The protein resides in the nucleus. The catalysed reaction is 2 oxidized [2Fe-2S]-[protein] + NADPH = 2 reduced [2Fe-2S]-[protein] + NADP(+) + H(+). Functionally, NADPH-dependent reductase which is a central component of the cytosolic iron-sulfur (Fe-S) protein assembly (CIA) machinery. Transfers electrons from NADPH via its FAD and FMN prosthetic groups to the [2Fe-2S] cluster of the anamorsin/DRE2 homolog, another key component of the CIA machinery. In turn, this reduced cluster provides electrons for assembly of cytosolic iron-sulfur cluster proteins. Catalyzes the NADP-dependent reduction of cytochrome c, but not cytochrome P450 in vitro. Required for embryo development. The protein is NADPH-dependent diflavin oxidoreductase 1 (ATR3) of Arabidopsis thaliana (Mouse-ear cress).